Consider the following 947-residue polypeptide: Pyruvate, phosphate dikinase 1, chloroplastic (947 aa).

Residues 1–62 (MAASVSRAIC…GRGQHCSPLR (62 aa)) constitute a chloroplast transit peptide. A disordered region spans residues 21-54 (DREATSFARRSVAAPRPPHAKAAGVIRSDSGAGR). Ala-63 bears the N-acetylalanine; partial mark. Thr-309 is modified (phosphothreonine). Ser-506 bears the Phosphoserine mark. At Thr-527 the chain carries Phosphothreonine; by PDRP1. At Ser-528 the chain carries Phosphoserine; by PDRP1. The active-site Tele-phosphohistidine intermediate is His-529. Positions 635, 692, 821, 842, 843, 844, and 845 each coordinate substrate. Glu-821 is a binding site for Mg(2+). Asp-845 is a binding site for Mg(2+). Cys-907 (proton donor) is an active-site residue.

This sequence belongs to the PEP-utilizing enzyme family. Homotetramer. It depends on Mg(2+) as a cofactor. Phosphorylation of Thr-527 in the dark inactivates the enzyme, dephosphorylation upon light stimulation reactivates the enzyme. More highly phosphorylated when grown under high rather than low light regimes (70 vs 900 umol photons/m-2/s). the degree of phosphorylation is strictly regulated by light intensity and the light/dark transition has no influence. Phosphorylated in both mesophyll and bundle sheath cells. The phosphorylation at Ser-528 may be important for the phosphorylation at Thr-527 and may also be regulated by light intensity. Isoform C4PPDKZM1 mainly localized in mesophyll cells and only a low level is found in bundle sheath cells. Isoform CYPPDKZM1 expressed in roots, stems and etiolated leaves.

The protein resides in the plastid. It is found in the chloroplast. Its subcellular location is the cytoplasm. It carries out the reaction pyruvate + phosphate + ATP = phosphoenolpyruvate + AMP + diphosphate + H(+). It participates in photosynthesis; C4 acid pathway. With respect to regulation, activated by light-induced dephosphorylation. Inhibited by dark-induced phosphorylation. Both reactions are catalyzed by PDRP1. Inactivated by cold due to the dissociation of the homotetramer. Independent of circadian regulation. In terms of biological role, formation of phosphoenolpyruvate, which is the primary acceptor of CO(2) in C4 and some Crassulacean acid metabolism plants. This Zea mays (Maize) protein is Pyruvate, phosphate dikinase 1, chloroplastic.